The following is a 237-amino-acid chain: Orotidine 5'-phosphate decarboxylase (237 aa).

Substrate contacts are provided by residues aspartate 11, lysine 34, 61–70 (DLKLHDIPNT), threonine 124, arginine 186, glutamine 195, glycine 215, and arginine 216. Lysine 63 serves as the catalytic Proton donor.

It belongs to the OMP decarboxylase family. Type 1 subfamily. As to quaternary structure, homodimer.

It catalyses the reaction orotidine 5'-phosphate + H(+) = UMP + CO2. Its pathway is pyrimidine metabolism; UMP biosynthesis via de novo pathway; UMP from orotate: step 2/2. In terms of biological role, catalyzes the decarboxylation of orotidine 5'-monophosphate (OMP) to uridine 5'-monophosphate (UMP). The polypeptide is Orotidine 5'-phosphate decarboxylase (Lactococcus lactis subsp. lactis (strain IL1403) (Streptococcus lactis)).